Reading from the N-terminus, the 447-residue chain is Phosphoglucosamine mutase (447 aa).

The active-site Phosphoserine intermediate is S100. Mg(2+)-binding residues include S100, D239, D241, and D243. S100 is modified (phosphoserine).

Belongs to the phosphohexose mutase family. The cofactor is Mg(2+). In terms of processing, activated by phosphorylation.

It catalyses the reaction alpha-D-glucosamine 1-phosphate = D-glucosamine 6-phosphate. Functionally, catalyzes the conversion of glucosamine-6-phosphate to glucosamine-1-phosphate. The polypeptide is Phosphoglucosamine mutase (Thermoanaerobacter sp. (strain X514)).